A 669-amino-acid chain; its full sequence is DNA ligase (669 aa).

NAD(+) is bound by residues 31-35 (DSVYD), 80-81 (SL), and E112. K114 (N6-AMP-lysine intermediate) is an active-site residue. Residues R135, E172, K289, and K313 each contribute to the NAD(+) site. Zn(2+) contacts are provided by C407, C410, C425, and C430. Residues 591–669 (TDSGKLKGKT…EAEFLQLLEP (79 aa)) enclose the BRCT domain.

Belongs to the NAD-dependent DNA ligase family. LigA subfamily. Requires Mg(2+) as cofactor. Mn(2+) serves as cofactor.

It carries out the reaction NAD(+) + (deoxyribonucleotide)n-3'-hydroxyl + 5'-phospho-(deoxyribonucleotide)m = (deoxyribonucleotide)n+m + AMP + beta-nicotinamide D-nucleotide.. DNA ligase that catalyzes the formation of phosphodiester linkages between 5'-phosphoryl and 3'-hydroxyl groups in double-stranded DNA using NAD as a coenzyme and as the energy source for the reaction. It is essential for DNA replication and repair of damaged DNA. The sequence is that of DNA ligase from Synechocystis sp. (strain ATCC 27184 / PCC 6803 / Kazusa).